The primary structure comprises 199 residues: Imidazoleglycerol-phosphate dehydratase (199 aa).

This sequence belongs to the imidazoleglycerol-phosphate dehydratase family.

It localises to the cytoplasm. It catalyses the reaction D-erythro-1-(imidazol-4-yl)glycerol 3-phosphate = 3-(imidazol-4-yl)-2-oxopropyl phosphate + H2O. It functions in the pathway amino-acid biosynthesis; L-histidine biosynthesis; L-histidine from 5-phospho-alpha-D-ribose 1-diphosphate: step 6/9. The polypeptide is Imidazoleglycerol-phosphate dehydratase (Methylibium petroleiphilum (strain ATCC BAA-1232 / LMG 22953 / PM1)).